The sequence spans 254 residues: 5'/3'-nucleotidase SurE (254 aa).

The a divalent metal cation site is built by D9, D10, S40, and N93.

Belongs to the SurE nucleotidase family. A divalent metal cation serves as cofactor.

Its subcellular location is the cytoplasm. The enzyme catalyses a ribonucleoside 5'-phosphate + H2O = a ribonucleoside + phosphate. It catalyses the reaction a ribonucleoside 3'-phosphate + H2O = a ribonucleoside + phosphate. The catalysed reaction is [phosphate](n) + H2O = [phosphate](n-1) + phosphate + H(+). Nucleotidase with a broad substrate specificity as it can dephosphorylate various ribo- and deoxyribonucleoside 5'-monophosphates and ribonucleoside 3'-monophosphates with highest affinity to 3'-AMP. Also hydrolyzes polyphosphate (exopolyphosphatase activity) with the preference for short-chain-length substrates (P20-25). Might be involved in the regulation of dNTP and NTP pools, and in the turnover of 3'-mononucleotides produced by numerous intracellular RNases (T1, T2, and F) during the degradation of various RNAs. This Yersinia pestis bv. Antiqua (strain Antiqua) protein is 5'/3'-nucleotidase SurE.